Here is a 431-residue protein sequence, read N- to C-terminus: TDP-daunosamine transferase DnrS (431 aa).

The N-terminal stretch at 1–23 (MKVLVTAFAMDAHFNGVVPLAWA) is a signal peptide.

The protein belongs to the glycosyltransferase 28 family.

It catalyses the reaction dTDP-beta-L-daunosamine + epsilon-rhodomycinone = rhodomycin D + dTDP + H(+). It participates in antibiotic biosynthesis; daunorubicin biosynthesis. The protein operates within antibiotic biosynthesis; carminomycin biosynthesis. Involved in the biosynthesis of the anthracyclines carminomycin and daunorubicin (daunomycin) which are aromatic polyketide antibiotics that exhibit high cytotoxicity and are widely applied in the chemotherapy of a variety of cancers. Catalyzes the addition of the TDP activated glycoside, L-daunosamine-TDP (2,3,6-trideoxy-3-aminohexose-TDP) at position C-7 of epsilon-rhodomycinone to yield rhodomycin D. Glycosylation is a prerequisite for biological activity of anthracyclines and requires DnrQ which seems to act as an activator. This chain is TDP-daunosamine transferase DnrS (dnrS), found in Streptomyces peucetius.